Consider the following 242-residue polypeptide: Probable transcriptional regulatory protein mhp472 (242 aa).

The protein belongs to the TACO1 family.

The protein resides in the cytoplasm. This is Probable transcriptional regulatory protein mhp472 from Mesomycoplasma hyopneumoniae (strain 232) (Mycoplasma hyopneumoniae).